Reading from the N-terminus, the 179-residue chain is Signal peptidase complex catalytic subunit SEC11A (179 aa).

At 1-16 (MLSLDFLDDVRRMNKR) the chain is on the cytoplasmic side. A helical; Signal-anchor for type II membrane protein transmembrane segment spans residues 17–36 (QLYYQVLNFGMIVSSALMIW). Residues 37 to 179 (KGLMVITGSE…LGLFVLVHRE (143 aa)) are Lumenal-facing. Active-site charge relay system residues include Ser-56, His-96, and Asp-122. The interval 165–176 (AVLFLLGLFVLV) is C-terminal short (CTS) helix.

The protein belongs to the peptidase S26B family. As to quaternary structure, component of the signal peptidase complex paralog A (SPC-A) composed of a catalytic subunit SEC11A and three accessory subunits SPCS1, SPCS2 and SPCS3. Within the complex, interacts with SPCS2 and SPCS3. The complex induces a local thinning of the ER membrane which is used to measure the length of the signal peptide (SP) h-region of protein substrates. This ensures the selectivity of the complex towards h-regions shorter than 18-20 amino acids.

It localises to the endoplasmic reticulum membrane. The catalysed reaction is Cleavage of hydrophobic, N-terminal signal or leader sequences from secreted and periplasmic proteins.. Its function is as follows. Catalytic component of the signal peptidase complex (SPC) which catalyzes the cleavage of N-terminal signal sequences from nascent proteins as they are translocated into the lumen of the endoplasmic reticulum. Specifically cleaves N-terminal signal peptides that contain a hydrophobic alpha-helix (h-region) shorter than 18-20 amino acids. The chain is Signal peptidase complex catalytic subunit SEC11A (SEC11A) from Bos taurus (Bovine).